We begin with the raw amino-acid sequence, 168 residues long: NADH-quinone oxidoreductase subunit B (168 aa).

Cys-49, Cys-50, Cys-114, and Cys-144 together coordinate [4Fe-4S] cluster.

This sequence belongs to the complex I 20 kDa subunit family. In terms of assembly, NDH-1 is composed of 14 different subunits. Subunits NuoB, C, D, E, F, and G constitute the peripheral sector of the complex. It depends on [4Fe-4S] cluster as a cofactor.

It localises to the cell membrane. It catalyses the reaction a quinone + NADH + 5 H(+)(in) = a quinol + NAD(+) + 4 H(+)(out). Functionally, NDH-1 shuttles electrons from NADH, via FMN and iron-sulfur (Fe-S) centers, to quinones in the respiratory chain. Couples the redox reaction to proton translocation (for every two electrons transferred, four hydrogen ions are translocated across the cytoplasmic membrane), and thus conserves the redox energy in a proton gradient. The sequence is that of NADH-quinone oxidoreductase subunit B from Wolbachia pipientis wMel.